The primary structure comprises 375 residues: Squamosa promoter-binding-like protein 9 (375 aa).

Disordered stretches follow at residues 1 to 30 (MEMGSNSGPGHGPGQAESGGSSTESSSFSG) and 43 to 73 (GGGGSGSSSSGGRSNRRVRGGGSGQSGQIPR). Low complexity predominate over residues 18–30 (SGGSSTESSSFSG). The SBP-type zinc finger occupies 71 to 148 (IPRCQVEGCG…AGHNERRRKP (78 aa)). Residues Cys-74, Cys-79, Cys-96, His-99, Cys-115, Cys-118, His-122, and Cys-134 each contribute to the Zn(2+) site. Residues 131 to 147 (KRSCRRRLAGHNERRRK) carry the Bipartite nuclear localization signal motif. 2 disordered regions span residues 252–278 (LLSNPHQPHDNNNNNNNNNNNNNNTWR) and 345–375 (SDHHHQSRRQYMEDENTRAYDSSSHHTNWSL). Residues 262 to 275 (NNNNNNNNNNNNNN) show a composition bias toward low complexity. Residues 345–362 (SDHHHQSRRQYMEDENTR) show a composition bias toward basic and acidic residues. Positions 363 to 375 (AYDSSSHHTNWSL) are enriched in polar residues.

Zn(2+) is required as a cofactor.

The protein localises to the nucleus. Its subcellular location is the cytoplasm. Trans-acting factor that binds specifically to the consensus nucleotide sequence 5'-TNCGTACAA-3'. The chain is Squamosa promoter-binding-like protein 9 (SPL9) from Arabidopsis thaliana (Mouse-ear cress).